The primary structure comprises 214 residues: dITP/XTP pyrophosphatase (214 aa).

Threonine 16–lysine 21 is a binding site for substrate. 2 residues coordinate Mg(2+): aspartate 48 and aspartate 77. Residue aspartate 77 is the Proton acceptor of the active site. Substrate-binding positions include serine 78, phenylalanine 163 to aspartate 166, lysine 186, and histidine 198 to arginine 199.

This sequence belongs to the HAM1 NTPase family. Homodimer. Mg(2+) is required as a cofactor.

The catalysed reaction is XTP + H2O = XMP + diphosphate + H(+). The enzyme catalyses dITP + H2O = dIMP + diphosphate + H(+). It catalyses the reaction ITP + H2O = IMP + diphosphate + H(+). Functionally, pyrophosphatase that catalyzes the hydrolysis of nucleoside triphosphates to their monophosphate derivatives, with a high preference for the non-canonical purine nucleotides XTP (xanthosine triphosphate), dITP (deoxyinosine triphosphate) and ITP. Seems to function as a house-cleaning enzyme that removes non-canonical purine nucleotides from the nucleotide pool, thus preventing their incorporation into DNA/RNA and avoiding chromosomal lesions. This chain is dITP/XTP pyrophosphatase, found in Bradyrhizobium sp. (strain BTAi1 / ATCC BAA-1182).